The sequence spans 372 residues: Cytochrome b (372 aa).

4 helical membrane passes run 25–45 (FGSM…FLAI), 69–90 (WIMQ…YIHI), 105–125 (WLSG…GYVL), and 170–190 (FFAL…IHII). Heme b is bound by residues His-75 and His-89. 2 residues coordinate heme b: His-174 and His-188. His-193 contacts a ubiquinone. A run of 4 helical transmembrane segments spans residues 218-238 (YKDM…LSFS), 280-300 (LGGT…PFTH), 312-332 (LSQA…WTAS), and 339-358 (FVTI…ITIP).

It belongs to the cytochrome b family. The cytochrome bc1 complex contains 3 respiratory subunits (MT-CYB, CYC1 and UQCRFS1), 2 core proteins (UQCRC1 and UQCRC2) and probably 6 low-molecular weight proteins. Heme b serves as cofactor.

It localises to the mitochondrion inner membrane. Its function is as follows. Component of the ubiquinol-cytochrome c reductase complex (complex III or cytochrome b-c1 complex) that is part of the mitochondrial respiratory chain. The b-c1 complex mediates electron transfer from ubiquinol to cytochrome c. Contributes to the generation of a proton gradient across the mitochondrial membrane that is then used for ATP synthesis. The protein is Cytochrome b (MT-CYB) of Naja multifasciata (Burrowing cobra).